A 242-amino-acid chain; its full sequence is ATP synthase subunit b (242 aa).

Transmembrane regions (helical) follow at residues 8 to 28 (VLPF…ASAP) and 87 to 107 (LMDL…LIKF).

Belongs to the ATPase B chain family. F-type ATPases have 2 components, F(1) - the catalytic core - and F(0) - the membrane proton channel. F(1) has five subunits: alpha(3), beta(3), gamma(1), delta(1), epsilon(1). F(0) has three main subunits: a(1), b(2) and c(10-14). The alpha and beta chains form an alternating ring which encloses part of the gamma chain. F(1) is attached to F(0) by a central stalk formed by the gamma and epsilon chains, while a peripheral stalk is formed by the delta and b chains.

The protein resides in the cell inner membrane. In terms of biological role, f(1)F(0) ATP synthase produces ATP from ADP in the presence of a proton or sodium gradient. F-type ATPases consist of two structural domains, F(1) containing the extramembraneous catalytic core and F(0) containing the membrane proton channel, linked together by a central stalk and a peripheral stalk. During catalysis, ATP synthesis in the catalytic domain of F(1) is coupled via a rotary mechanism of the central stalk subunits to proton translocation. Component of the F(0) channel, it forms part of the peripheral stalk, linking F(1) to F(0). The protein is ATP synthase subunit b of Desulfotalea psychrophila (strain LSv54 / DSM 12343).